The following is a 676-amino-acid chain: Envelope glycoprotein (676 aa).

The N-terminal stretch at 1-32 is a signal peptide; that stretch reads MGASGILQLPRERFRKTSFFVWVIILFHKVFS. The Extracellular segment spans residues 33–650; the sequence is IPLGVVHNNT…GSNWWTGWKQ (618 aa). A glycan (N-linked (GlcNAc...) asparagine; by host) is linked at asparagine 40. Intrachain disulfides connect cysteine 53-cysteine 609, cysteine 108-cysteine 135, cysteine 121-cysteine 147, cysteine 511-cysteine 556, and cysteine 601-cysteine 608. Residues 54 to 201 form a receptor-binding region; sequence RDKLSSTSQL…DFFQSPPLHE (148 aa). 5 N-linked (GlcNAc...) asparagine; by host glycosylation sites follow: asparagine 204, asparagine 228, asparagine 257, asparagine 268, and asparagine 296. The segment at 305-485 is mucin-like region; that stretch reads ELSFVPVPET…LSGPGFLTNT (181 aa). Positions 356–463 are disordered; sequence IKGKDTMPTT…PTTLPEQHTA (108 aa). The segment covering 361–374 has biased composition (low complexity); sequence TMPTTVTGVPTTTP. Residues 402 to 422 show a composition bias toward polar residues; it reads TTQPAKTTSQPTNSTESTTLN. Asparagine 414 is a glycosylation site (N-linked (GlcNAc...) asparagine; by host). Residues 423-440 show a composition bias toward low complexity; sequence PTSEPSSRGTGPSSPTVP. N-linked (GlcNAc...) asparagine; by host glycosylation is present at asparagine 441. Over residues 452 to 463 the composition is skewed to polar residues; sequence TTPTTLPEQHTA. The tract at residues 524 to 539 is fusion peptide; sequence GAAIGLAWIPYFGPAA. Positions 554–595 form a coiled coil; that stretch reads LICGLRQLANETTQALQLFLRATTELRTFSILNRKAIDFLLQ. An N-linked (GlcNAc...) asparagine; by host glycan is attached at asparagine 563. Residues 615-634 adopt a coiled-coil conformation; that stretch reads WTKNITDKIDQIIHDFVDNN. N-linked (GlcNAc...) asparagine; by host glycosylation is present at asparagine 618. The chain crosses the membrane as a helical span at residues 651 to 671; sequence WVPAGIGITGVIIAIIALLCI. Residues cysteine 670 and cysteine 672 are each lipidated (S-palmitoyl cysteine; by host). Topologically, residues 672–676 are cytoplasmic; the sequence is CKFML.

Belongs to the filoviruses glycoprotein family. In terms of assembly, homotrimer; each monomer consists of a GP1 and a GP2 subunit linked by disulfide bonds. The resulting peplomers (GP1,2) protrude from the virus surface as spikes. GP1 and GP2delta are part of GP1,2delta soluble complexes released by ectodomain shedding. GP1,2 interacts with host integrin ITGAV/alpha-V and CLEC10A. Also binds human CD209 and CLEC4M (collectively referred to as DC-SIGN(R)), as well as human FOLR1. Interacts with host entry receptor NPC1. The signal peptide region modulates GP's high mannose glycosylation, thereby determining the efficiency of the interactions with DC-SIGN(R). In terms of processing, N-glycosylated. Post-translationally, O-glycosylated in the mucin-like region. Palmitoylation of GP2 is not required for its function. In terms of processing, specific enzymatic cleavages in vivo yield mature proteins. The precursor is processed into GP1 and GP2 by host cell furin in the trans Golgi, and maybe by other host proteases, to yield the mature GP1 and GP2 proteins. The cleavage site corresponds to the furin optimal cleavage sequence [KR]-X-[KR]-R. This cleavage does not seem to be required for function. After the internalization of the virus into cell endosomes, GP1 C-terminus is removed by the endosomal proteases cathepsin B, cathepsin L, or both, leaving a 19-kDa N-terminal fragment which is further digested by cathepsin B. Proteolytic processing of GP1,2 by host ADAM17 can remove the transmembrane anchor of GP2 and leads to shedding of complexes consisting in GP1 and truncated GP2 (GP1,2delta).

It localises to the virion membrane. The protein localises to the host cell membrane. Its subcellular location is the secreted. Its function is as follows. GP1 is responsible for binding to the receptor(s) on target cells. Interacts with CD209/DC-SIGN and CLEC4M/DC-SIGNR which act as cofactors for virus entry into the host cell. Binding to CD209 and CLEC4M, which are respectively found on dendritic cells (DCs), and on endothelial cells of liver sinusoids and lymph node sinuses, facilitate infection of macrophages and endothelial cells. These interactions not only facilitate virus cell entry, but also allow capture of viral particles by DCs and subsequent transmission to susceptible cells without DCs infection (trans infection). Binding to the macrophage specific lectin CLEC10A also seems to enhance virus infectivity. Interaction with FOLR1/folate receptor alpha may be a cofactor for virus entry in some cell types, although results are contradictory. Members of the Tyro3 receptor tyrosine kinase family also seem to be cell entry factors in filovirus infection. Once attached, the virions are internalized through clathrin-dependent endocytosis and/or macropinocytosis. After internalization of the virus into the endosomes of the host cell, proteolysis of GP1 by two cysteine proteases, CTSB/cathepsin B and CTSL/cathepsin L presumably induces a conformational change of GP2, unmasking its fusion peptide and initiating membranes fusion. Functionally, GP2 acts as a class I viral fusion protein. Under the current model, the protein has at least 3 conformational states: pre-fusion native state, pre-hairpin intermediate state, and post-fusion hairpin state. During viral and target cell membrane fusion, the coiled coil regions (heptad repeats) assume a trimer-of-hairpins structure, positioning the fusion peptide in close proximity to the C-terminal region of the ectodomain. The formation of this structure appears to drive apposition and subsequent fusion of viral and target cell membranes. Responsible for penetration of the virus into the cell cytoplasm by mediating the fusion of the membrane of the endocytosed virus particle with the endosomal membrane. Low pH in endosomes induces an irreversible conformational change in GP2, releasing the fusion hydrophobic peptide. In terms of biological role, GP1,2 which is the disulfid-linked complex of GP1 and GP2, mediates endothelial cell activation and decreases endothelial barrier function. Mediates activation of primary macrophages. At terminal stages of the viral infection, when its expression is high, GP1,2 down-modulates the expression of various host cell surface molecules that are essential for immune surveillance and cell adhesion. Down-modulates integrins ITGA1, ITGA2, ITGA3, ITGA4, ITGA5, ITGA6, ITGAV and ITGB1. GP1,2 alters the cellular recycling of the dimer alpha-V/beta-3 via a dynamin-dependent pathway. Decrease in the host cell surface expression of various adhesion molecules may lead to cell detachment, contributing to the disruption of blood vessel integrity and hemorrhages developed during Ebola virus infection (cytotoxicity). This cytotoxicity appears late in the infection, only after the massive release of viral particles by infected cells. Down-modulation of host MHC-I, leading to altered recognition by immune cells, may explain the immune suppression and inflammatory dysfunction linked to Ebola infection. Also down-modulates EGFR surface expression. Counteracts the antiviral effect of host tetherin. GP2delta is part of the complex GP1,2delta released by host ADAM17 metalloprotease. This secreted complex may play a role in the pathogenesis of the virus by efficiently blocking the neutralizing antibodies that would otherwise neutralize the virus surface glycoproteins GP1,2. Might therefore contribute to the lack of inflammatory reaction seen during infection in spite the of extensive necrosis and massive virus production. GP1,2delta does not seem to be involved in activation of primary macrophages. This Tai Forest ebolavirus (strain Cote d'Ivoire-94) (TAFV) protein is Envelope glycoprotein (GP).